Here is a 340-residue protein sequence, read N- to C-terminus: Sodium/bile acid cotransporter 7 (340 aa).

Residues 1–10 (MRLLERVRKE) are Cytoplasmic-facing. A helical transmembrane segment spans residues 11–31 (WFMVGIVVAIGAAKLEPSVGV). Residues 32 to 37 (NGGPLK) are Extracellular-facing. A helical transmembrane segment spans residues 38–58 (PEITVSYIAVATIFFNSGLSL). Topologically, residues 59–71 (KTEELTSALVHLK) are cytoplasmic. The helical transmembrane segment at 72-92 (LHLFIQVFTLAFFPTTIWLFL) threads the bilayer. Over 93 to 116 (QLLSVTSINEWLLKGLQTVGCMPP) the chain is Extracellular. Residues 117–137 (PVSSAVILTKAVGGNEAAAIF) form a helical membrane-spanning segment. Residue N138 is a topological domain, cytoplasmic. A helical transmembrane segment spans residues 139 to 159 (SAFGSFLGIVVTPVLLLLFLG). Over 160-163 (SSSS) the chain is Extracellular. The chain crosses the membrane as a helical span at residues 164 to 184 (VPFTSIFSQLFMTVVVPLVIG). Residues 185 to 201 (QIVRRYIKDWLERKKPP) are Cytoplasmic-facing. The helical transmembrane segment at 202-222 (FGVVSSSVLLMIIYTTFCDTF) threads the bilayer. Topologically, residues 223–234 (SNPNIDLDKFSL) are extracellular. A helical transmembrane segment spans residues 235 to 255 (ILILFIIVSIQLSFMLLTFVF). Over 256-270 (STRNNSGFTPADTVA) the chain is Cytoplasmic. The chain crosses the membrane as a helical span at residues 271 to 291 (IIFCSTHKSLTLGIPMLKIVF). The Extracellular segment spans residues 292-298 (AGHEHLS). Residues 299-319 (LISLPLLIYHPAQILLGSVLV) traverse the membrane as a helical segment. Residues 320-340 (PTIKSWMVSRQKGVKLTRPTV) are Cytoplasmic-facing.

Belongs to the bile acid:sodium symporter (BASS) (TC 2.A.28) family. In terms of tissue distribution, strongly expressed in liver, adrenal gland, small intestine and colon. Moderately expressed in heart, lung, kidney and spleen. Weakly expressed in brain.

The protein resides in the cell membrane. It localises to the endoplasmic reticulum membrane. The protein localises to the golgi apparatus membrane. Functionally, involved in teeth and skeletal development. Has an essential role in the biosynthesis and trafficking of glycosaminoglycans and glycoproteins to produce a proper functioning extracellular matrix. Required for extracellular matrix mineralization. Also involved in the regulation of cellular calcium homeostasis. Does not show transport activity towards bile acids or steroid sulfates (including taurocholate, cholate, chenodeoxycholate, estrone-3-sulfate, dehydroepiandrosterone sulfate (DHEAS) and pregnenolone sulfate). The polypeptide is Sodium/bile acid cotransporter 7 (Slc10a7) (Rattus norvegicus (Rat)).